Consider the following 212-residue polypeptide: FMN-dependent NAD(P)H:quinone oxidoreductase 1 (212 aa).

FMN contacts are provided by residues S10, 16 to 18 (SQS), and 97 to 100 (MYNF). Residues N99 and Y131 each coordinate substrate. FMN contacts are provided by residues 145 to 148 (SRGG) and E187. Substrate is bound at residue E188.

Belongs to the azoreductase type 1 family. As to quaternary structure, homodimer. Homotetramer formed by a dimer of dimers when the ionic strength is high. FMN is required as a cofactor.

It catalyses the reaction 2 a quinone + NADPH + H(+) = 2 a 1,4-benzosemiquinone + NADP(+). The catalysed reaction is 2 a quinone + NADH + H(+) = 2 a 1,4-benzosemiquinone + NAD(+). The enzyme catalyses N,N-dimethyl-1,4-phenylenediamine + anthranilate + 2 NAD(+) = 2-(4-dimethylaminophenyl)diazenylbenzoate + 2 NADH + 2 H(+). With respect to regulation, azoreductase activity increases with salt strength. In terms of biological role, quinone reductase that provides resistance to thiol-specific stress caused by electrophilic quinones. Shows a preference for benzoquinones. Its function is as follows. Also exhibits azoreductase activity. Catalyzes the reductive cleavage of the azo bond in aromatic azo compounds to the corresponding amines. NADPH is the preferred electron donor for azoreductase activity, but it can also use NADH. Can reduce different classes of azo dyes, including the common azo dyes methyl red and p-aminoazobenzene sulfonamide (PAABSA). Can activate several azo pro-drugs used in the treatment of inflammatory bowel disease (IBD), including balsalazide, sulfasalazine and olsalazine. Also acts as a nitrodeductase, and can reduce and hence activate the nitroaromatic drug nitrofurazone, a broad spectrum antibiotic. This is FMN-dependent NAD(P)H:quinone oxidoreductase 1 from Pseudomonas aeruginosa (strain ATCC 15692 / DSM 22644 / CIP 104116 / JCM 14847 / LMG 12228 / 1C / PRS 101 / PAO1).